We begin with the raw amino-acid sequence, 155 residues long: Small ribosomal subunit protein uS7c (155 aa).

It belongs to the universal ribosomal protein uS7 family. As to quaternary structure, part of the 30S ribosomal subunit.

Its subcellular location is the plastid. The protein localises to the chloroplast. Functionally, one of the primary rRNA binding proteins, it binds directly to 16S rRNA where it nucleates assembly of the head domain of the 30S subunit. The chain is Small ribosomal subunit protein uS7c (rps7) from Yucca glauca (Soapweed yucca).